A 243-amino-acid polypeptide reads, in one-letter code: Probable transcriptional regulatory protein Patl_0550 (243 aa).

Belongs to the TACO1 family.

It is found in the cytoplasm. In Pseudoalteromonas atlantica (strain T6c / ATCC BAA-1087), this protein is Probable transcriptional regulatory protein Patl_0550.